The primary structure comprises 312 residues: Malate dehydrogenase (312 aa).

NAD(+) is bound by residues 7–13 and Asp34; that span reads GAAGGIG. Substrate-binding residues include Arg81 and Arg87. Residues Asn94 and 117-119 each bind NAD(+); that span reads ITN. Substrate is bound by residues Asn119 and Arg153. The active-site Proton acceptor is the His177. Met227 contacts NAD(+).

It belongs to the LDH/MDH superfamily. MDH type 1 family. In terms of assembly, homodimer.

The enzyme catalyses (S)-malate + NAD(+) = oxaloacetate + NADH + H(+). Functionally, catalyzes the reversible oxidation of malate to oxaloacetate. The sequence is that of Malate dehydrogenase (mdh) from Klebsiella pneumoniae subsp. pneumoniae (strain ATCC 700721 / MGH 78578).